The following is a 62-amino-acid chain: Conotoxin Cal12.2e (62 aa).

An N-terminal signal peptide occupies residues 1-19; the sequence is MKLTCVLVVLLLVLPFGDL.

It belongs to the conotoxin O1 superfamily. In terms of processing, contains 4 disulfide bonds. As to expression, expressed by the venom duct.

The protein resides in the secreted. Functionally, probable neurotoxin. This chain is Conotoxin Cal12.2e, found in Californiconus californicus (California cone).